Consider the following 257-residue polypeptide: uncharacterized protein (257 aa).

Helical transmembrane passes span 5–25, 29–49, 53–73, 146–166, 180–200, and 216–236; these read FLYFITKSISYALFMVLIVTF, LALVGLFLPGIVLMSILGTLI, TLSFYPAWIVGIIGCMCGDWI, LGCILWPPIYFLPGIFTGIAI, IQFLAAILLIWLGIFLLWKLW, and VNLCLLLTISLSAGITIMIYI.

It belongs to the DedA family.

The protein localises to the cell membrane. This is an uncharacterized protein from Buchnera aphidicola subsp. Baizongia pistaciae (strain Bp).